The chain runs to 770 residues: Transducin-like enhancer protein 1 (770 aa).

A q domain region spans residues 1–131; sequence MFPQSRHPTP…IIGQQQLQAQ (131 aa). Disordered regions lie at residues 128-157 and 176-348; these read LQAQ…GIPP and HLAI…PAID. Residues 132–199 are GP domain; the sequence is HLSHGHGPPV…HHRDREPGTS (68 aa). Basic and acidic residues-rich tracts occupy residues 178–196 and 209–246; these read AIKD…DREP and RGTD…KSDD. The ccN domain stretch occupies residues 200–268; the sequence is NSLLVPDSLR…SPRASPAHSP (69 aa). The short motif at 225–228 is the Nuclear localization signal element; the sequence is KKRK. The residue at position 239 (Ser-239) is a Phosphoserine. A compositionally biased stretch (low complexity) spans 257–266; sequence PSSPRASPAH. A phosphoserine; by CDK1 mark is found at Ser-259, Ser-263, and Ser-267. Residues 267–283 are compositionally biased toward basic and acidic residues; that stretch reads SPRENGIDKNRLLKKDA. The tract at residues 269–450 is SP domain; that stretch reads RENGIDKNRL…GGKPAYSFHV (182 aa). Positions 284–298 are enriched in low complexity; the sequence is SSSPASTASSASSTS. Ser-286 is modified (phosphoserine). Residues 300 to 310 show a composition bias toward basic and acidic residues; sequence KSKEMSLHEKA. WD repeat units follow at residues 470–501, 528–558, 572–602, 614–644, 696–726, and 737–767; these read GIPR…HVYT, NRDN…SIWD, SSAP…AVWD, GHTD…RSWD, LHES…NAWR, and KESS…TVYE.

The protein belongs to the WD repeat Groucho/TLE family. Homooligomer and heterooligomer with other family members. Binds RUNX1, RUNX3, FOXA2, KDM6A, UTY, histone H3, HESX1, ESRRG and the NF-kappa-B subunit RELA. Interacts with HES1 (via WRPW motif). Binds TCF7, LEF1, TCF7L1 and TCF7L2. Interacts with SIX3. Interacts with EFNB1. Interacts with TLE4. Interacts with FOXG1/BF-1; the interaction is inhibited by TLE6/GRG6. Phosphorylated, probably by CDK1. The degree of phosphorylation varies throughout the cell cycle, and is highest at the G2/M transition. Becomes hyperphosphorylated in response to cell differentiation and interaction with HES1 or RUNX1. Post-translationally, ubiquitinated by XIAP/BIRC4. In all tissues examined, mostly in brain, liver and muscle.

It localises to the nucleus. Transcriptional corepressor that binds to a number of transcription factors. Inhibits NF-kappa-B-regulated gene expression. Inhibits the transcriptional activation mediated by FOXA2, and by CTNNB1 and TCF family members in Wnt signaling. Enhances FOXG1/BF-1- and HES1-mediated transcriptional repression. The effects of full-length TLE family members may be modulated by association with dominant-negative AES. Unusual function as coactivator for ESRRG. This Homo sapiens (Human) protein is Transducin-like enhancer protein 1 (TLE1).